Reading from the N-terminus, the 176-residue chain is KxDL motif-containing protein 1 (176 aa).

Methionine 1 bears the N-acetylmethionine mark. The tract at residues 95–176 (HPEAFSHIPE…HTDDEEMPGE (82 aa)) is disordered. Positions 119-131 (STTTTIATSEQST) are enriched in low complexity. The span at 132-145 (GSCDTSPDTVSPSL) shows a compositional bias: polar residues.

The protein belongs to the KXD1 family. In terms of assembly, component of the BLOC-one-related complex (BORC) which is composed of BLOC1S1, BLOC1S2, BORCS5, BORCS6, BORCS7, BORCS8, KXD1 and SNAPIN. Associates with the BLOC-1 complex. Interacts with BLOC1S1. Interacts with DTNBP1/BLOC1S7 (via coiled-coil domain).

It localises to the lysosome membrane. As part of the BORC complex may play a role in lysosomes movement and localization at the cell periphery. Associated with the cytosolic face of lysosomes, the BORC complex may recruit ARL8B and couple lysosomes to microtubule plus-end-directed kinesin motor. May also be involved in the biogenesis of lysosome-related organelles such as melanosomes. In Bos taurus (Bovine), this protein is KxDL motif-containing protein 1 (KXD1).